The primary structure comprises 304 residues: Ornithine carbamoyltransferase (304 aa).

Residues 47 to 50, Arg98, and 125 to 128 each bind carbamoyl phosphate; these read STRT and HPCQ. L-ornithine contacts are provided by residues Asn156, Asp221, and 225 to 226; that span reads SM. Carbamoyl phosphate is bound by residues 262–263 and Arg290; that span reads CL.

Belongs to the aspartate/ornithine carbamoyltransferase superfamily. OTCase family.

Its subcellular location is the cytoplasm. The catalysed reaction is carbamoyl phosphate + L-ornithine = L-citrulline + phosphate + H(+). Its pathway is amino-acid biosynthesis; L-arginine biosynthesis; L-arginine from L-ornithine and carbamoyl phosphate: step 1/3. Reversibly catalyzes the transfer of the carbamoyl group from carbamoyl phosphate (CP) to the N(epsilon) atom of ornithine (ORN) to produce L-citrulline. This Methanococcus aeolicus (strain ATCC BAA-1280 / DSM 17508 / OCM 812 / Nankai-3) protein is Ornithine carbamoyltransferase.